A 236-amino-acid polypeptide reads, in one-letter code: Lipid A 4'-phosphatase (236 aa).

5 helical membrane passes run 26–46 (FFYL…FLFF), 58–78 (FIVG…SSFF), 134–153 (YTWT…IYIG), 160–182 (IIPG…LYAR), and 200–220 (GDSI…MLCM).

Belongs to the lipid A LpxF 4'-phosphatase family.

Its subcellular location is the cell inner membrane. It participates in bacterial outer membrane biogenesis; LPS lipid A biosynthesis. In terms of biological role, removes the 4'-phosphate group from lipid A species. Absence of phosphate groups in lipid A renders the bacteria resistant to host-derived cationic antimicrobial peptides (CAMP) and allows it to camouflage itself from the host innate immune response. Removal of the 4'-phosphate may be required to generate the substrate for deacylation of the pentaacyl lipid A to the tetraccylated lipid A species. The protein is Lipid A 4'-phosphatase of Porphyromonas gingivalis (strain ATCC 33277 / DSM 20709 / CIP 103683 / JCM 12257 / NCTC 11834 / 2561).